Reading from the N-terminus, the 416-residue chain is Probable protein phosphatase 2C 75 (416 aa).

Disordered regions lie at residues 1–20 (MTEI…SPTK) and 32–51 (RRQA…DRTD). Residues 108–411 (LYGIVSVMGR…DNISVVVIDL (304 aa)) form the PPM-type phosphatase domain. Positions 149, 150, 337, and 402 each coordinate Mn(2+).

The protein belongs to the PP2C family. The cofactor is Mg(2+). It depends on Mn(2+) as a cofactor.

The catalysed reaction is O-phospho-L-seryl-[protein] + H2O = L-seryl-[protein] + phosphate. It carries out the reaction O-phospho-L-threonyl-[protein] + H2O = L-threonyl-[protein] + phosphate. Functionally, negative regulator of abscisic acid (ABA) responses during seed germination. This is Probable protein phosphatase 2C 75 (AHG1) from Arabidopsis thaliana (Mouse-ear cress).